The following is a 373-amino-acid chain: Alcohol dehydrogenase class-3 (373 aa).

Position 1 is an N-acetylalanine (A1). Residues C44, H66, C96, C99, C102, C110, and C173 each coordinate Zn(2+).

It belongs to the zinc-containing alcohol dehydrogenase family. Class-III subfamily. Homodimer. It depends on Zn(2+) as a cofactor.

It is found in the cytoplasm. It carries out the reaction a primary alcohol + NAD(+) = an aldehyde + NADH + H(+). It catalyses the reaction a secondary alcohol + NAD(+) = a ketone + NADH + H(+). The catalysed reaction is S-(hydroxymethyl)glutathione + NADP(+) = S-formylglutathione + NADPH + H(+). The enzyme catalyses S-(hydroxymethyl)glutathione + NAD(+) = S-formylglutathione + NADH + H(+). It carries out the reaction S-nitrosoglutathione + NADH + H(+) = S-(hydroxysulfenamide)glutathione + NAD(+). Class-III ADH is remarkably ineffective in oxidizing ethanol, but it readily catalyzes the oxidation of long-chain primary alcohols and the oxidation of S-(hydroxymethyl) glutathione. Also acts as a S-nitroso-glutathione reductase by catalyzing the NADH-dependent reduction of S-nitrosoglutathione, thereby regulating protein S-nitrosylation. This is Alcohol dehydrogenase class-3 from Saara hardwickii (Indian spiny-tailed lizard).